A 717-amino-acid polypeptide reads, in one-letter code: CRISPR-associated protein Cas8b (717 aa).

Disordered stretches follow at residues 263–283 and 698–717; these read IGVF…DQSW and HEKE…STTN. Acidic residues predominate over residues 701 to 717; sequence EDEDDQDTEEPAESTTN.

The protein localises to the cytoplasm. In terms of biological role, CRISPR (clustered regularly interspaced short palindromic repeat) is an adaptive immune system that provides protection against mobile genetic elements (viruses, transposable elements and conjugative plasmids). CRISPR clusters contain sequences complementary to antecedent mobile elements and target invading nucleic acids. CRISPR clusters are transcribed and processed into CRISPR RNA (crRNA). Plasmid targeted by CRISPR locus P1 transform wild-type cells very poorly. This subunit might be involved in stabilizing crRNA. The chain is CRISPR-associated protein Cas8b from Haloferax volcanii (strain ATCC 29605 / DSM 3757 / JCM 8879 / NBRC 14742 / NCIMB 2012 / VKM B-1768 / DS2) (Halobacterium volcanii).